The following is a 151-amino-acid chain: uncharacterized protein (151 aa).

A Response regulatory domain is found at lysine 2–glutamine 133. Aspartate 53 carries the 4-aspartylphosphate modification.

This is an uncharacterized protein from Sinorhizobium fredii (strain NBRC 101917 / NGR234).